The primary structure comprises 299 residues: Acetaldehyde dehydrogenase 2 (299 aa).

The active-site Acyl-thioester intermediate is cysteine 130. NAD(+) is bound by residues 161–169 (SVGPGTRKN) and asparagine 272.

This sequence belongs to the acetaldehyde dehydrogenase family.

It carries out the reaction acetaldehyde + NAD(+) + CoA = acetyl-CoA + NADH + H(+). In Burkholderia lata (strain ATCC 17760 / DSM 23089 / LMG 22485 / NCIMB 9086 / R18194 / 383), this protein is Acetaldehyde dehydrogenase 2.